The sequence spans 683 residues: Long-chain-fatty-acid--CoA ligase 5 (683 aa).

A helical; Signal-anchor for type III membrane protein transmembrane segment spans residues 12–32 (LPTPALICLLTFGTAIFLWLI). Over 33 to 683 (NRPQPVLPLI…IKSLYESIEE (651 aa)) the chain is Cytoplasmic. Lys-361 is modified (N6-acetyllysine).

This sequence belongs to the ATP-dependent AMP-binding enzyme family.

It localises to the mitochondrion. It is found in the endoplasmic reticulum. The protein resides in the mitochondrion outer membrane. Its subcellular location is the endoplasmic reticulum membrane. The protein localises to the cell membrane. The enzyme catalyses a long-chain fatty acid + ATP + CoA = a long-chain fatty acyl-CoA + AMP + diphosphate. The catalysed reaction is (5Z,8Z,11Z,14Z)-eicosatetraenoate + ATP + CoA = (5Z,8Z,11Z,14Z)-eicosatetraenoyl-CoA + AMP + diphosphate. It carries out the reaction hexadecanoate + ATP + CoA = hexadecanoyl-CoA + AMP + diphosphate. It catalyses the reaction (E)-hexadec-2-enoate + ATP + CoA = (2E)-hexadecenoyl-CoA + AMP + diphosphate. The enzyme catalyses 15-hydroxy-(5Z,8Z,11Z,13E)-eicosatetraenoate + ATP + CoA = 15-hydroxy-(5Z,8Z,11Z,13E)-eicosatetraenoyl-CoA + AMP + diphosphate. The catalysed reaction is 12-hydroxy-(5Z,8Z,10E,14Z)-eicosatetraenoate + ATP + CoA = 12-hydroxy-(5Z,8Z,10E,14Z)-eicosatetraenoyl-CoA + AMP + diphosphate. It carries out the reaction 5-hydroxy-(6E,8Z,11Z,14Z)-eicosatetraenoate + ATP + CoA = 5-hydroxy-(6E,8Z,11Z,14Z)-eicosatetraenoyl-CoA + AMP + diphosphate. It catalyses the reaction 14,15-epoxy-(5Z,8Z,11Z)-eicosatrienoate + ATP + CoA = 14,15-epoxy-(5Z,8Z,11Z)-eicosatrienoyl-CoA + AMP + diphosphate. The enzyme catalyses 11,12-epoxy-(5Z,8Z,14Z)-eicosatrienoate + ATP + CoA = 11,12-epoxy-(5Z,8Z,14Z)-eicosatrienoyl-CoA + AMP + diphosphate. The catalysed reaction is (9Z)-octadecenoate + ATP + CoA = (9Z)-octadecenoyl-CoA + AMP + diphosphate. In terms of biological role, catalyzes the conversion of long-chain fatty acids to their active form acyl-CoAs for both synthesis of cellular lipids, and degradation via beta-oxidation. ACSL5 may activate fatty acids from exogenous sources for the synthesis of triacylglycerol destined for intracellular storage. It was suggested that it may also stimulate fatty acid oxidation. At the villus tip of the crypt-villus axis of the small intestine may sensitize epithelial cells to apoptosis specifically triggered by the death ligand TRAIL. May have a role in the survival of glioma cells. Utilizes a wide range of saturated fatty acids with a preference for C16-C18 unsaturated fatty acids. This is Long-chain-fatty-acid--CoA ligase 5 from Mus musculus (Mouse).